We begin with the raw amino-acid sequence, 148 residues long: MEGLQRSTISFRRQGSSGIVFDDRLIAELNKSGNNEQKDESQRDEQPKPMSESSEQVKPIDEKDKLRPIKTGGGAPGGIERSRSNGGGAQRHHRTTGRVSPAVDPPSPRISSCGCCSAFGKNPPGKKVNPRKRPPKRRSRRRIVTKKR.

Polar residues predominate over residues 1-17 (MEGLQRSTISFRRQGSS). The tract at residues 1–148 (MEGLQRSTIS…SRRRIVTKKR (148 aa)) is disordered. Composition is skewed to basic and acidic residues over residues 36–47 (EQKDESQRDEQP) and 58–67 (KPIDEKDKLR). Phosphoserine occurs at positions 100 and 107. Residues 128 to 148 (VNPRKRPPKRRSRRRIVTKKR) show a composition bias toward basic residues.

This is an uncharacterized protein from Arabidopsis thaliana (Mouse-ear cress).